Reading from the N-terminus, the 256-residue chain is CCAAT/enhancer-binding protein delta (256 aa).

S2 is modified (N-acetylserine). Disordered regions lie at residues 18–40 (TAEP…AEPA), 92–121 (GGPA…APGS), and 139–206 (AAAQ…NQEM). A Glycyl lysine isopeptide (Lys-Gly) (interchain with G-Cter in SUMO) cross-link involves residue K108. Residues 143-162 (PTPPASPEPPRRSPAPPAPG) show a composition bias toward pro residues. The segment covering 164–188 (ARDKAAGKRGPDRGSPEYRQRRERN) has biased composition (basic and acidic residues). One can recognise a bZIP domain in the interval 178–241 (SPEYRQRRER…AGLRRFFKQL (64 aa)). Residues 182-209 (RQRRERNNIAVRKSRDKAKRRNQEMQQK) form a basic motif region. Residues 213–241 (LSAENEKLQQRVEQLTRDLAGLRRFFKQL) form a leucine-zipper region.

This sequence belongs to the bZIP family. C/EBP subfamily. As to quaternary structure, binds DNA as a homodimer and as a heterodimer. Can form stable heterodimers with CEBPB. Can form stable heterodimers with CEBPA and CEBPE. Directly interacts with SPI1/PU.1; this interaction does not affect DNA-binding properties of each partner. Interacts with PRDM16.

It localises to the nucleus. Transcription activator that recognizes two different DNA motifs: the CCAAT homology common to many promoters and the enhanced core homology common to many enhancers. Important transcription factor regulating the expression of genes involved in immune and inflammatory responses. Transcriptional activator that enhances IL6 transcription alone and as heterodimer with CEBPB. This is CCAAT/enhancer-binding protein delta (CEBPD) from Bos taurus (Bovine).